The chain runs to 343 residues: Probable magnesium transporter NIPA4 (343 aa).

The Extracellular segment spans residues 1–18; that stretch reads MAESSGSWRDSYKGMSSD. Residues 19–39 traverse the membrane as a helical segment; sequence NIKGLVLALSSSLFIGASFIV. The Cytoplasmic segment spans residues 40 to 66; that stretch reads KKKGLKKAASTGTRAGVGGYSYLYEPL. Residues 67–87 form a helical membrane-spanning segment; it reads WWIGMTTMLLGEIANFAAYAF. The Extracellular segment spans residues 88-90; it reads APA. Residues 91–111 form a helical membrane-spanning segment; it reads ILVTPLGAVSIIISAVLAHII. At 112–115 the chain is on the cytoplasmic side; the sequence is LREK. A helical transmembrane segment spans residues 116 to 136; sequence LHIFGILGCALCVVGSTTIVL. Over 137 to 157 the chain is Extracellular; sequence HAPQEREIDSVIEVWNLATEP. Residues 158 to 178 traverse the membrane as a helical segment; it reads AFMFYASLVIGAAVFLIIRFV. Residues 179–189 lie on the Cytoplasmic side of the membrane; the sequence is PQYGQTNVMVY. A helical membrane pass occupies residues 190 to 210; it reads IGICSLVGSLSVMSVKALGIA. Topologically, residues 211–220 are extracellular; the sequence is LKLTFSGTNQ. Residues 221–241 form a helical membrane-spanning segment; the sequence is LFYPQTWIFTLVVLTCVVTQL. The Cytoplasmic portion of the chain corresponds to 242–254; it reads NYLNKALDTFNTA. A helical transmembrane segment spans residues 255–275; the sequence is IVSPIYYVMFTSLTILASVIM. The Extracellular portion of the chain corresponds to 276 to 283; the sequence is FKDWDRQN. The chain crosses the membrane as a helical span at residues 284–304; it reads GTQIVTEICGFVTILSGTFLL. Residues 305 to 343 lie on the Cytoplasmic side of the membrane; the sequence is HRTKDMVEGSSVILPLRISKHINEEEGIPLRRQESLRSP.

The protein belongs to the NIPA (TC 2.A.7) family. Homodimer.

Its subcellular location is the cell membrane. It localises to the early endosome. In terms of biological role, acts as a Mg(2+) transporter. Can also transport other divalent cations such as Fe(2+), Sr(2+), Ba(2+), Mn(2+) and Co(2+) but to a much less extent than Mg(2+). This chain is Probable magnesium transporter NIPA4, found in Arabidopsis thaliana (Mouse-ear cress).